The following is a 332-amino-acid chain: L-lactate dehydrogenase A chain (332 aa).

Residues 29-57 and R99 each bind NAD(+); that span reads GAVG…VEDK. Residues R106, N138, and R169 each coordinate substrate. N138 provides a ligand contact to NAD(+). H193 acts as the Proton acceptor in catalysis. A substrate-binding site is contributed by T248.

It belongs to the LDH/MDH superfamily. LDH family. As to quaternary structure, homotetramer.

The protein localises to the cytoplasm. The enzyme catalyses (S)-lactate + NAD(+) = pyruvate + NADH + H(+). Its pathway is fermentation; pyruvate fermentation to lactate; (S)-lactate from pyruvate: step 1/1. Interconverts simultaneously and stereospecifically pyruvate and lactate with concomitant interconversion of NADH and NAD(+). The polypeptide is L-lactate dehydrogenase A chain (LDHA) (Caiman crocodilus apaporiensis (Rio Apaporis caiman)).